Consider the following 441-residue polypeptide: 3-phosphoshikimate 1-carboxyvinyltransferase (441 aa).

Residues 1 to 21 (MSANGPSHPARELKAGGSLSG) are disordered. Positions 29, 30, and 34 each coordinate 3-phosphoshikimate. Lysine 29 contacts phosphoenolpyruvate. Phosphoenolpyruvate contacts are provided by glycine 103 and arginine 132. The 3-phosphoshikimate site is built by serine 177, glutamine 179, aspartate 328, and lysine 355. Glutamine 179 contacts phosphoenolpyruvate. Aspartate 328 functions as the Proton acceptor in the catalytic mechanism. The phosphoenolpyruvate site is built by arginine 359 and arginine 401.

The protein belongs to the EPSP synthase family. Monomer.

The protein localises to the cytoplasm. It catalyses the reaction 3-phosphoshikimate + phosphoenolpyruvate = 5-O-(1-carboxyvinyl)-3-phosphoshikimate + phosphate. The protein operates within metabolic intermediate biosynthesis; chorismate biosynthesis; chorismate from D-erythrose 4-phosphate and phosphoenolpyruvate: step 6/7. In terms of biological role, catalyzes the transfer of the enolpyruvyl moiety of phosphoenolpyruvate (PEP) to the 5-hydroxyl of shikimate-3-phosphate (S3P) to produce enolpyruvyl shikimate-3-phosphate and inorganic phosphate. In Parasynechococcus marenigrum (strain WH8102), this protein is 3-phosphoshikimate 1-carboxyvinyltransferase.